A 637-amino-acid polypeptide reads, in one-letter code: Phosphomethylpyrimidine synthase (637 aa).

Substrate-binding positions include N242, M271, Y300, H336, 356–358, 397–400, and E436; these read SRG and DGLR. H440 serves as a coordination point for Zn(2+). Y463 contributes to the substrate binding site. H504 provides a ligand contact to Zn(2+). [4Fe-4S] cluster is bound by residues C584, C587, and C592.

Belongs to the ThiC family. Homodimer. Requires [4Fe-4S] cluster as cofactor.

The enzyme catalyses 5-amino-1-(5-phospho-beta-D-ribosyl)imidazole + S-adenosyl-L-methionine = 4-amino-2-methyl-5-(phosphooxymethyl)pyrimidine + CO + 5'-deoxyadenosine + formate + L-methionine + 3 H(+). The protein operates within cofactor biosynthesis; thiamine diphosphate biosynthesis. Functionally, catalyzes the synthesis of the hydroxymethylpyrimidine phosphate (HMP-P) moiety of thiamine from aminoimidazole ribotide (AIR) in a radical S-adenosyl-L-methionine (SAM)-dependent reaction. This chain is Phosphomethylpyrimidine synthase, found in Bordetella avium (strain 197N).